We begin with the raw amino-acid sequence, 345 residues long: Pyruvate dehydrogenase E1 component subunit alpha (345 aa).

Heterodimer of an alpha and a beta chain. It depends on thiamine diphosphate as a cofactor.

The catalysed reaction is N(6)-[(R)-lipoyl]-L-lysyl-[protein] + pyruvate + H(+) = N(6)-[(R)-S(8)-acetyldihydrolipoyl]-L-lysyl-[protein] + CO2. Functionally, the pyruvate dehydrogenase complex catalyzes the overall conversion of pyruvate to acetyl-CoA and CO(2). It contains multiple copies of three enzymatic components: pyruvate dehydrogenase (E1), dihydrolipoamide acetyltransferase (E2) and lipoamide dehydrogenase (E3). This chain is Pyruvate dehydrogenase E1 component subunit alpha (pdhA), found in Acholeplasma laidlawii.